Reading from the N-terminus, the 1169-residue chain is ATP-dependent helicase/deoxyribonuclease subunit B (1169 aa).

The UvrD-like helicase ATP-binding domain maps to 1–296; the sequence is MTLRIVSGRS…QHVEANFANM (296 aa). 8–15 is an ATP binding site; sequence GRSGTGKS. Residues 276 to 582 enclose the UvrD-like helicase C-terminal domain; the sequence is YYTQRFQSED…EFSRIPPTLD (307 aa). Positions 804, 1129, 1132, and 1138 each coordinate [4Fe-4S] cluster.

It belongs to the helicase family. AddB/RexB type 1 subfamily. Heterodimer of AddA and AddB. Mg(2+) is required as a cofactor. The cofactor is [4Fe-4S] cluster.

Functionally, the heterodimer acts as both an ATP-dependent DNA helicase and an ATP-dependent, dual-direction single-stranded exonuclease. Recognizes the chi site generating a DNA molecule suitable for the initiation of homologous recombination. The AddB subunit has 5' -&gt; 3' nuclease activity but not helicase activity. The sequence is that of ATP-dependent helicase/deoxyribonuclease subunit B from Lysinibacillus sphaericus (strain C3-41).